The following is a 1900-amino-acid chain: Phosphatidylinositol 4-kinase STT4 (1900 aa).

Phosphoserine is present on Ser-459. The PIK helical domain maps to Lys-1345–Arg-1530. The interval Met-1531–Val-1648 is pleckstrin homology (PH) domain conferring phosphoinositide binding specificity. In terms of domain architecture, PI3K/PI4K catalytic spans Phe-1617–Phe-1884. A G-loop region spans residues Ile-1623–Asp-1629. The tract at residues Gln-1751–Asn-1759 is catalytic loop. The interval His-1770 to Thr-1794 is activation loop.

This sequence belongs to the PI3/PI4-kinase family. Type III PI4K subfamily.

The catalysed reaction is a 1,2-diacyl-sn-glycero-3-phospho-(1D-myo-inositol) + ATP = a 1,2-diacyl-sn-glycero-3-phospho-(1D-myo-inositol 4-phosphate) + ADP + H(+). Acts on phosphatidylinositol (PI) in the first committed step in the production of the second messenger inositol 1,4,5,-trisphosphate. STT4 functions in PKC1 protein kinase pathway. The protein is Phosphatidylinositol 4-kinase STT4 (STT4) of Saccharomyces cerevisiae (strain ATCC 204508 / S288c) (Baker's yeast).